The primary structure comprises 84 residues: ATP synthase subunit c (84 aa).

2 helical membrane passes run 9–29 (IIGA…GFAI) and 54–74 (IVAG…LLFI).

It belongs to the ATPase C chain family. As to quaternary structure, F-type ATPases have 2 components, F(1) - the catalytic core - and F(0) - the membrane proton channel. F(1) has five subunits: alpha(3), beta(3), gamma(1), delta(1), epsilon(1). F(0) has three main subunits: a(1), b(2) and c(10-14). The alpha and beta chains form an alternating ring which encloses part of the gamma chain. F(1) is attached to F(0) by a central stalk formed by the gamma and epsilon chains, while a peripheral stalk is formed by the delta and b chains.

Its subcellular location is the cell inner membrane. F(1)F(0) ATP synthase produces ATP from ADP in the presence of a proton or sodium gradient. F-type ATPases consist of two structural domains, F(1) containing the extramembraneous catalytic core and F(0) containing the membrane proton channel, linked together by a central stalk and a peripheral stalk. During catalysis, ATP synthesis in the catalytic domain of F(1) is coupled via a rotary mechanism of the central stalk subunits to proton translocation. Its function is as follows. Key component of the F(0) channel; it plays a direct role in translocation across the membrane. A homomeric c-ring of between 10-14 subunits forms the central stalk rotor element with the F(1) delta and epsilon subunits. The sequence is that of ATP synthase subunit c from Haemophilus influenzae (strain PittEE).